The chain runs to 3948 residues: Equisetin synthetase eqxS (3948 aa).

The 435-residue stretch at 4 to 438 (SEPIAVIGSA…GTNAHAIIEA (435 aa)) folds into the Ketosynthase family 3 (KS3) domain. Residues Cys177, His316, and His358 each act as for beta-ketoacyl synthase activity in the active site. The segment at 543-847 (IFTGQGTQWP…DTIEAISEGR (305 aa)) is malonyl-CoA:ACP transacylase (MAT) domain. The segment at 931 to 1066 (HPLLGRRCHD…AQIKASLGAP (136 aa)) is N-terminal hotdog fold. The dehydratase (DH) domain stretch occupies residues 931–1233 (HPLLGRRCHD…MELVPFSPAT (303 aa)). The PKS/mFAS DH domain maps to 931–1235 (HPLLGRRCHD…LVPFSPATPA (305 aa)). Residue His964 is the Proton acceptor; for dehydratase activity of the active site. Positions 1081-1235 (LRPVSVDRFY…LVPFSPATPA (155 aa)) are C-terminal hotdog fold. The active-site Proton donor; for dehydratase activity is Asp1141. The segment at 1376 to 1574 (MLQDVYEQGF…GIDTTTPPVH (199 aa)) is methyltransferase (MT) domain. Residues 2105–2277 (TFLLVGLTGE…VAASSIDISS (173 aa)) are ketoreductase (KR) domain. A Carrier 1 domain is found at 2389 to 2464 (AIIKESFIVR…DLVDECLDLL (76 aa)). At Ser2424 the chain carries O-(pantetheine 4'-phosphoryl)serine. The interval 2480–2553 (QAAKPTTVIP…NSTDILAPPR (74 aa)) is disordered. 2 stretches are compositionally biased toward polar residues: residues 2487 to 2505 (VIPQ…QGTS) and 2513 to 2528 (GSDS…LTSW). A compositionally biased stretch (basic and acidic residues) spans 2529–2541 (DRQDSSPPDKSDD). The condensation (C) domain stretch occupies residues 2564-2991 (SYGQAGFWFL…IRGSDKTVDA (428 aa)). The adenylation (A) (KR) domain stretch occupies residues 3026 to 3424 (QVIQDNPDNI…DGLLFCDGRL (399 aa)). The Carrier 2 domain occupies 3540-3617 (EILTPSEQRL…AMAGVLEDCG (78 aa)). At Ser3577 the chain carries O-(pantetheine 4'-phosphoryl)serine. Positions 3653–3870 (LTGSSGYLGR…MPVNEVVEAI (218 aa)) are reductase (RED) domain.

In the C-terminal section; belongs to the NRP synthetase family.

It carries out the reaction L-serine + 7 malonyl-CoA + acetyl-CoA + 2 S-adenosyl-L-methionine + ATP + 8 NADPH + 11 H(+) = (5S)-3-[(2E,6R,8E,10E,12E)-2,6-dimethyltetradeca-2,8,10,12-tetraenoyl]-5-(hydroxymethyl)pyrrolidine-2,4-dione + AMP + 2 S-adenosyl-L-homocysteine + 7 CO2 + diphosphate + 8 NADP(+) + 8 CoA + 6 H2O. It participates in mycotoxin biosynthesis. In terms of biological role, hybrid PKS-NRPS synthetase; part of the gene cluster that mediates the biosynthesis of equisetin, a trans-fused decalin-containing tetramic acid with antimicrobial activity. The PKS module of eqxS together with the enoylreductase eqxC catalyze the formation of the polyketide unit which is then conjugated to L-serine by the condensation domain of the eqxS NRPS module. Activity of the Dieckmann cyclase domain (RED) results in release of the Dieckmann product intermediate. Diels-Alderase eqx3 is involved in endo-selective Diels-Alder cycloaddition to form the decalin ring, leading to the production of N-desmethylequisetin also called trichosetin. Subsequent N-methylation is carried out by eqxD to give equisetin. This is Equisetin synthetase eqxS from Fusarium heterosporum.